Consider the following 362-residue polypeptide: Dihydroorotate dehydrogenase (quinone) (362 aa).

Residues 62–66 and T86 contribute to the FMN site; that span reads AGYDK. A substrate-binding site is contributed by K66. 111 to 115 is a substrate binding site; the sequence is NRLGF. 2 residues coordinate FMN: N139 and N170. Residue N170 participates in substrate binding. Residue S173 is the Nucleophile of the active site. N175 contributes to the substrate binding site. K215 and S243 together coordinate FMN. 244–245 contributes to the substrate binding site; the sequence is NT. Residues G266, G295, and 316–317 contribute to the FMN site; that span reads YS.

Belongs to the dihydroorotate dehydrogenase family. Type 2 subfamily. As to quaternary structure, monomer. It depends on FMN as a cofactor.

The protein resides in the cell membrane. The enzyme catalyses (S)-dihydroorotate + a quinone = orotate + a quinol. It participates in pyrimidine metabolism; UMP biosynthesis via de novo pathway; orotate from (S)-dihydroorotate (quinone route): step 1/1. Functionally, catalyzes the conversion of dihydroorotate to orotate with quinone as electron acceptor. This chain is Dihydroorotate dehydrogenase (quinone), found in Rhizobium leguminosarum bv. trifolii (strain WSM2304).